Here is a 430-residue protein sequence, read N- to C-terminus: tRNA(Ile)-lysidine synthase (430 aa).

27-32 (SGGSDS) serves as a coordination point for ATP.

The protein belongs to the tRNA(Ile)-lysidine synthase family.

The protein resides in the cytoplasm. The enzyme catalyses cytidine(34) in tRNA(Ile2) + L-lysine + ATP = lysidine(34) in tRNA(Ile2) + AMP + diphosphate + H(+). Its function is as follows. Ligates lysine onto the cytidine present at position 34 of the AUA codon-specific tRNA(Ile) that contains the anticodon CAU, in an ATP-dependent manner. Cytidine is converted to lysidine, thus changing the amino acid specificity of the tRNA from methionine to isoleucine. This is tRNA(Ile)-lysidine synthase from Rickettsia felis (strain ATCC VR-1525 / URRWXCal2) (Rickettsia azadi).